The primary structure comprises 322 residues: tRNA U34 carboxymethyltransferase (322 aa).

Carboxy-S-adenosyl-L-methionine is bound by residues lysine 91, tryptophan 105, lysine 110, glycine 129, 179-180 (LE), methionine 195, tyrosine 199, and arginine 314.

This sequence belongs to the class I-like SAM-binding methyltransferase superfamily. CmoB family. In terms of assembly, homotetramer.

The enzyme catalyses carboxy-S-adenosyl-L-methionine + 5-hydroxyuridine(34) in tRNA = 5-carboxymethoxyuridine(34) in tRNA + S-adenosyl-L-homocysteine + H(+). Its function is as follows. Catalyzes carboxymethyl transfer from carboxy-S-adenosyl-L-methionine (Cx-SAM) to 5-hydroxyuridine (ho5U) to form 5-carboxymethoxyuridine (cmo5U) at position 34 in tRNAs. The protein is tRNA U34 carboxymethyltransferase of Pseudomonas aeruginosa (strain LESB58).